A 425-amino-acid polypeptide reads, in one-letter code: Serine--tRNA ligase (425 aa).

233 to 235 (TAE) serves as a coordination point for L-serine. Residue 264 to 266 (RRE) participates in ATP binding. Glu-287 lines the L-serine pocket. 351-354 (EISS) is a binding site for ATP. Ser-385 is a binding site for L-serine.

The protein belongs to the class-II aminoacyl-tRNA synthetase family. Type-1 seryl-tRNA synthetase subfamily. As to quaternary structure, homodimer. The tRNA molecule binds across the dimer.

It localises to the cytoplasm. It carries out the reaction tRNA(Ser) + L-serine + ATP = L-seryl-tRNA(Ser) + AMP + diphosphate + H(+). The catalysed reaction is tRNA(Sec) + L-serine + ATP = L-seryl-tRNA(Sec) + AMP + diphosphate + H(+). It functions in the pathway aminoacyl-tRNA biosynthesis; selenocysteinyl-tRNA(Sec) biosynthesis; L-seryl-tRNA(Sec) from L-serine and tRNA(Sec): step 1/1. Its function is as follows. Catalyzes the attachment of serine to tRNA(Ser). Is also able to aminoacylate tRNA(Sec) with serine, to form the misacylated tRNA L-seryl-tRNA(Sec), which will be further converted into selenocysteinyl-tRNA(Sec). The polypeptide is Serine--tRNA ligase (Synechococcus sp. (strain CC9605)).